Here is a 675-residue protein sequence, read N- to C-terminus: Polyphosphate kinase (675 aa).

Asn-42 is an ATP binding site. 2 residues coordinate Mg(2+): Arg-372 and Arg-401. His-431 serves as the catalytic Phosphohistidine intermediate. ATP-binding residues include Tyr-464, Arg-558, and His-586.

The protein belongs to the polyphosphate kinase 1 (PPK1) family. It depends on Mg(2+) as a cofactor. Post-translationally, an intermediate of this reaction is the autophosphorylated ppk in which a phosphate is covalently linked to a histidine residue through a N-P bond.

It catalyses the reaction [phosphate](n) + ATP = [phosphate](n+1) + ADP. In terms of biological role, catalyzes the reversible transfer of the terminal phosphate of ATP to form a long-chain polyphosphate (polyP). The sequence is that of Polyphosphate kinase from Helicobacter pylori (strain J99 / ATCC 700824) (Campylobacter pylori J99).